Consider the following 349-residue polypeptide: Cyclic amide hydrolase (349 aa).

Residues 1 to 90 (MTSPEDTAGV…AVFVDDPASS (90 aa)) form an RU A region. Arginine 38 contacts substrate. The interval 99 to 231 (GLSIGVTTTA…AAVLVMGNSP (133 aa)) is RU B. Lysine 149 is an active-site residue. Substrate-binding positions include arginine 176, 214–215 (SA), lysine 311, and 330–331 (SG). The Nucleophile role is filled by serine 214. The segment at 237–349 (YRIGHGVLRD…GGGTVAVIAR (113 aa)) is RU C.

Belongs to the cyclic amide hydrolase (CyAH) family. As to quaternary structure, homotetramer.

Its function is as follows. Cyclic amide hydrolase of unknown substrate specificity. Catalyzes the hydrolytic ring-opening of a cyclic amide. Does not act on cyanuric acid nor barbituric acid. In Rhodococcus sp, this protein is Cyclic amide hydrolase.